A 146-amino-acid polypeptide reads, in one-letter code: Hemoglobin subunit beta (146 aa).

Position 1 is an N-acetylvaline (valine 1). Positions 2 to 146 constitute a Globin domain; the sequence is HLTPEEKNAV…VANALAHKYH (145 aa). The residue at position 12 (threonine 12) is a Phosphothreonine. The residue at position 44 (serine 44) is a Phosphoserine. N6-acetyllysine is present on lysine 59. Histidine 63 is a heme b binding site. An N6-acetyllysine modification is found at lysine 82. Residue histidine 92 participates in heme b binding. Cysteine 93 is modified (S-nitrosocysteine). Residue lysine 144 is modified to N6-acetyllysine.

The protein belongs to the globin family. As to quaternary structure, heterotetramer of two alpha chains and two beta chains. In terms of tissue distribution, red blood cells.

Involved in oxygen transport from the lung to the various peripheral tissues. The protein is Hemoglobin subunit beta (HBB) of Papio cynocephalus (Yellow baboon).